Consider the following 400-residue polypeptide: CCA-adding enzyme (400 aa).

Glycine 27 and arginine 30 together coordinate ATP. Residues glycine 27 and arginine 30 each contribute to the CTP site. Residues aspartate 40 and aspartate 42 each coordinate Mg(2+). Arginine 111, aspartate 154, arginine 157, arginine 160, and arginine 163 together coordinate ATP. Residues arginine 111, aspartate 154, arginine 157, arginine 160, and arginine 163 each contribute to the CTP site.

The protein belongs to the tRNA nucleotidyltransferase/poly(A) polymerase family. Bacterial CCA-adding enzyme type 3 subfamily. In terms of assembly, homodimer. Mg(2+) serves as cofactor.

The enzyme catalyses a tRNA precursor + 2 CTP + ATP = a tRNA with a 3' CCA end + 3 diphosphate. It catalyses the reaction a tRNA with a 3' CCA end + 2 CTP + ATP = a tRNA with a 3' CCACCA end + 3 diphosphate. Catalyzes the addition and repair of the essential 3'-terminal CCA sequence in tRNAs without using a nucleic acid template. Adds these three nucleotides in the order of C, C, and A to the tRNA nucleotide-73, using CTP and ATP as substrates and producing inorganic pyrophosphate. tRNA 3'-terminal CCA addition is required both for tRNA processing and repair. Also involved in tRNA surveillance by mediating tandem CCA addition to generate a CCACCA at the 3' terminus of unstable tRNAs. While stable tRNAs receive only 3'-terminal CCA, unstable tRNAs are marked with CCACCA and rapidly degraded. This chain is CCA-adding enzyme, found in Bacillus pumilus (strain SAFR-032).